We begin with the raw amino-acid sequence, 264 residues long: 3-methyl-2-oxobutanoate hydroxymethyltransferase (264 aa).

Mg(2+) contacts are provided by Asp-45 and Asp-84. Residues 45–46 (DS), Asp-84, and Lys-112 contribute to the 3-methyl-2-oxobutanoate site. Glu-114 contacts Mg(2+). Catalysis depends on Glu-181, which acts as the Proton acceptor.

This sequence belongs to the PanB family. Homodecamer; pentamer of dimers. Requires Mg(2+) as cofactor.

Its subcellular location is the cytoplasm. It carries out the reaction 3-methyl-2-oxobutanoate + (6R)-5,10-methylene-5,6,7,8-tetrahydrofolate + H2O = 2-dehydropantoate + (6S)-5,6,7,8-tetrahydrofolate. The protein operates within cofactor biosynthesis; (R)-pantothenate biosynthesis; (R)-pantoate from 3-methyl-2-oxobutanoate: step 1/2. Catalyzes the reversible reaction in which hydroxymethyl group from 5,10-methylenetetrahydrofolate is transferred onto alpha-ketoisovalerate to form ketopantoate. The sequence is that of 3-methyl-2-oxobutanoate hydroxymethyltransferase from Shewanella denitrificans (strain OS217 / ATCC BAA-1090 / DSM 15013).